Consider the following 316-residue polypeptide: Olfactory receptor 2K2 (316 aa).

The Extracellular segment spans residues 1 to 20; the sequence is MQGENFTIWSIFFLEGFSQY. An N-linked (GlcNAc...) asparagine glycan is attached at Asn-5. A helical transmembrane segment spans residues 21-41; the sequence is PGLEVVLFVFSLVMYLTTLLG. At 42–65 the chain is on the cytoplasmic side; that stretch reads NSTLILITILDSRLKTPMYLFLGN. Residues 66-86 form a helical membrane-spanning segment; it reads LSFMDICYTSASVPTLLVNLL. Residues 87–97 are Extracellular-facing; that stretch reads SSQKTIIFSGC. Cys-97 and Cys-188 are oxidised to a cystine. The helical transmembrane segment at 98-118 threads the bilayer; the sequence is AVQMYLSLAMGSTECVLLAVM. The Cytoplasmic segment spans residues 119 to 143; that stretch reads AYDRYVAICNPLRYSIIMNRCVCAR. Residues 144–164 traverse the membrane as a helical segment; that stretch reads MATVSWVTGCLTALLETSFAL. Over 165–199 the chain is Extracellular; it reads QIPLCGNLIDHFTCEILAVLKLACTSSLLMNTIML. The chain crosses the membrane as a helical span at residues 200–220; it reads VVSILLLPIPMLLVCISYIFI. Residues 221–238 are Cytoplasmic-facing; the sequence is LSTILRITSAEGRNKAFS. The helical transmembrane segment at 239–259 threads the bilayer; that stretch reads TCGAHLTVVILYYGAALSMYL. The Extracellular portion of the chain corresponds to 260–270; that stretch reads KPSSSNAQKID. The chain crosses the membrane as a helical span at residues 271-291; sequence KIISLLYGVLTPMLNPIIYSL. The Cytoplasmic portion of the chain corresponds to 292 to 316; the sequence is RNKEVKDAMKKLLGKITLHQTHEHL.

Belongs to the G-protein coupled receptor 1 family.

It localises to the cell membrane. Functionally, odorant receptor. The protein is Olfactory receptor 2K2 (OR2K2) of Homo sapiens (Human).